The primary structure comprises 545 residues: Chaperonin GroEL (545 aa).

Residues Thr29–Pro32, Asp86–Thr90, Gly413, Asn476–Ala478, and Asp492 each bind ATP.

It belongs to the chaperonin (HSP60) family. Forms a cylinder of 14 subunits composed of two heptameric rings stacked back-to-back. Interacts with the co-chaperonin GroES.

The protein resides in the cytoplasm. It catalyses the reaction ATP + H2O + a folded polypeptide = ADP + phosphate + an unfolded polypeptide.. Together with its co-chaperonin GroES, plays an essential role in assisting protein folding. The GroEL-GroES system forms a nano-cage that allows encapsulation of the non-native substrate proteins and provides a physical environment optimized to promote and accelerate protein folding. In Oceanobacillus iheyensis (strain DSM 14371 / CIP 107618 / JCM 11309 / KCTC 3954 / HTE831), this protein is Chaperonin GroEL.